Reading from the N-terminus, the 774-residue chain is Two pore channel protein 2 (774 aa).

The Cytoplasmic segment spans residues 1 to 92 (MEEEPLLAGS…GSLRLYRWYY (92 aa)). The helical transmembrane segment at 93–113 (SNLCQWGLGLTIAVVLALAFI) threads the bilayer. The Extracellular segment spans residues 114–140 (ERPSSLTYTSDIRVKPKPWEPPCGMTE). The chain crosses the membrane as a helical span at residues 141–161 (GIEIVCLCIFILDVTAKGYLI). Residues 162 to 170 (GWEEFRMNK) lie on the Cytoplasmic side of the membrane. Residues 171–191 (WLLAYLIVITASVIDWMLSIS) traverse the membrane as a helical segment. The Extracellular segment spans residues 192 to 197 (MLCDEN). The chain crosses the membrane as a helical span at residues 198–218 (LRVRRLIRPFFLLQNSSLMKK). Residues 217–221 (KKTLK) are interaction with phosphatidylinositol 3,5-bisphosphate. The Cytoplasmic portion of the chain corresponds to 219–232 (TLKCIKRTLPEIAS). A helical transmembrane segment spans residues 233 to 253 (VILLLALHICLFTMIGMLIFA). Topologically, residues 254–267 (KSDDPKQNGEWQTY) are extracellular. An intramembrane region (helical; Pore-forming) is located at residues 268-292 (FRNLPKALSSLLVLLTTANNPDVMI). Topologically, residues 293–302 (PAYSLNRGYS) are extracellular. A helical transmembrane segment spans residues 303–323 (IFFILFSVFGTYLLMNLMTAI). Topologically, residues 324–452 (IYNQFRGYLL…YVYSHYYISV (129 aa)) are cytoplasmic. A helical membrane pass occupies residues 453 to 475 (LGNAVALANVICICTVLVLNAEK). Residues 476–486 (SASEKNYFYME) are Extracellular-facing. The chain crosses the membrane as a helical span at residues 487–507 (IINCIFILYYLIEMLLKIVAF). The Cytoplasmic segment spans residues 508 to 518 (GWKGYLSYRNN). A helical transmembrane segment spans residues 519–539 (IFDGFLTVLLLAIQIVIFITF). Topologically, residues 540–564 (KIPYVDVDPVPRHVMALWEMIRLVN) are extracellular. Residues 565–585 (MLIVFRFLRIIPEIKLMAVVA) traverse the membrane as a helical segment. Residues 586–596 (STIVDLVKNLR) are Cytoplasmic-facing. Residues 597–617 (AFAGILLVVYYMFAVLGIWLF) form a helical membrane-spanning segment. The Extracellular portion of the chain corresponds to 618-658 (QGAISPPSNMSLVSNSSLENITGPYSMECGTFEQLEYWPNN). 3 N-linked (GlcNAc...) asparagine glycosylation sites follow: Asn-626, Asn-632, and Asn-637. The segment at residues 659–681 (FDDFASSLILLYNIMVVNNWHVF) is an intramembrane region (helical; Pore-forming). Topologically, residues 682 to 696 (TDAYARYTTDWSLVY) are extracellular. A helical membrane pass occupies residues 697–717 (FVVWWLTSSVMWVNLFVALIL). Residues 718 to 774 (ENFTYKWDRSNGLSVEDVERIAYQSTVQLMFKEHVKEPTEEELLAQLHQHPHLHLSW) lie on the Cytoplasmic side of the membrane.

The protein belongs to the calcium channel alpha-1 subunit (TC 1.A.1.11) family. Two pore calcium channel subfamily. In terms of assembly, homodimer. N-glycosylated.

The protein resides in the late endosome membrane. It localises to the lysosome membrane. It carries out the reaction Na(+)(in) = Na(+)(out). The enzyme catalyses Ca(2+)(in) = Ca(2+)(out). Intracellular channel initially characterized as a non-selective Ca(2+)-permeable channel activated by NAADP (nicotinic acid adenine dinucleotide phosphate), it is also a highly-selective Na(+) channel activated directly by PI(3,5)P2 (phosphatidylinositol 3,5-bisphosphate). Localizes to the lysosomal and late endosome membranes where it regulates organellar membrane excitability, membrane trafficking, and pH homeostasis. The sequence is that of Two pore channel protein 2 (tpcn2) from Danio rerio (Zebrafish).